Reading from the N-terminus, the 276-residue chain is S-adenosylmethionine decarboxylase proenzyme (276 aa).

Residue serine 124 is the Schiff-base intermediate with substrate; via pyruvic acid of the active site. Serine 124 carries the pyruvic acid (Ser); by autocatalysis modification. Histidine 129 acts as the Proton acceptor; for processing activity in catalysis. Cysteine 152 (proton donor; for catalytic activity) is an active-site residue.

Belongs to the prokaryotic AdoMetDC family. Type 2 subfamily. Heterooctamer of four alpha and four beta chains arranged as a tetramer of alpha/beta heterodimers. The cofactor is pyruvate. Post-translationally, is synthesized initially as an inactive proenzyme. Formation of the active enzyme involves a self-maturation process in which the active site pyruvoyl group is generated from an internal serine residue via an autocatalytic post-translational modification. Two non-identical subunits are generated from the proenzyme in this reaction, and the pyruvate is formed at the N-terminus of the alpha chain, which is derived from the carboxyl end of the proenzyme. The post-translation cleavage follows an unusual pathway, termed non-hydrolytic serinolysis, in which the side chain hydroxyl group of the serine supplies its oxygen atom to form the C-terminus of the beta chain, while the remainder of the serine residue undergoes an oxidative deamination to produce ammonia and the pyruvoyl group blocking the N-terminus of the alpha chain.

The enzyme catalyses S-adenosyl-L-methionine + H(+) = S-adenosyl 3-(methylsulfanyl)propylamine + CO2. The protein operates within amine and polyamine biosynthesis; S-adenosylmethioninamine biosynthesis; S-adenosylmethioninamine from S-adenosyl-L-methionine: step 1/1. Its function is as follows. Catalyzes the decarboxylation of S-adenosylmethionine to S-adenosylmethioninamine (dcAdoMet), the propylamine donor required for the synthesis of the polyamines spermine and spermidine from the diamine putrescine. In Desulfitobacterium hafniense (strain Y51), this protein is S-adenosylmethionine decarboxylase proenzyme.